The following is a 475-amino-acid chain: tRNA-2-methylthio-N(6)-dimethylallyladenosine synthase (475 aa).

Residues lysine 3–alanine 120 form the MTTase N-terminal domain. [4Fe-4S] cluster-binding residues include cysteine 12, cysteine 49, cysteine 83, cysteine 157, cysteine 161, and cysteine 164. Residues arginine 143–arginine 375 form the Radical SAM core domain. A TRAM domain is found at arginine 378–arginine 441.

It belongs to the methylthiotransferase family. MiaB subfamily. In terms of assembly, monomer. The cofactor is [4Fe-4S] cluster.

The protein resides in the cytoplasm. It catalyses the reaction N(6)-dimethylallyladenosine(37) in tRNA + (sulfur carrier)-SH + AH2 + 2 S-adenosyl-L-methionine = 2-methylsulfanyl-N(6)-dimethylallyladenosine(37) in tRNA + (sulfur carrier)-H + 5'-deoxyadenosine + L-methionine + A + S-adenosyl-L-homocysteine + 2 H(+). Functionally, catalyzes the methylthiolation of N6-(dimethylallyl)adenosine (i(6)A), leading to the formation of 2-methylthio-N6-(dimethylallyl)adenosine (ms(2)i(6)A) at position 37 in tRNAs that read codons beginning with uridine. The protein is tRNA-2-methylthio-N(6)-dimethylallyladenosine synthase of Shewanella halifaxensis (strain HAW-EB4).